A 320-amino-acid chain; its full sequence is Histidine decarboxylase proenzyme (320 aa).

Positions 2–11 (NKNLEANRNR) are excised as a propeptide. Residue S98 is modified to Pyruvic acid (Ser). E215 acts as the Proton donor in catalysis.

As to quaternary structure, the proenzyme is a hexamer of identical pi chains; each pi chain monomer is cleaved to form a small (or beta) chain and a large (or alpha) chain by non-hydrolytic self-catalysis. The cofactor is pyruvate.

It catalyses the reaction L-histidine + H(+) = histamine + CO2. The polypeptide is Histidine decarboxylase proenzyme (hdc) (Clostridium perfringens (strain 13 / Type A)).